The sequence spans 385 residues: Transcription factor-like protein DPB (385 aa).

Disordered regions lie at residues 1 to 53 (MTTT…EQTI) and 71 to 102 (DIQG…KTGR). Over residues 22–31 (PSTRSWGTAV) the composition is skewed to polar residues. The segment covering 32–53 (SGQSVSTSGSMGSPSSRSEQTI) has biased composition (low complexity). The DNA-binding element occupies 101–184 (GRGLRQFSMK…KKEIQWRGLP (84 aa)). Positions 150–184 (DEKNIRRRVYDALNVLMAMDIISKDKKEIQWRGLP) match the DEF box motif. The stretch at 185–234 (RTSLSDIEELKNERLSLRNRIEKKTAYSQELEEQYVGLQNLIQRNEHLYS) forms a coiled coil. The tract at residues 296-385 (PPQQPNGRNN…IMNSSMKPEN (90 aa)) is disordered. Residues 300-327 (PNGRNNSQLVCHNFTPENPNKGPSTGPT) are compositionally biased toward polar residues. Residues 336–349 (HLQSQQHQQHSQLQ) show a composition bias toward low complexity. Residues 355-364 (ETNNVTSSAD) show a composition bias toward polar residues.

It belongs to the E2F/DP family. As to quaternary structure, heterodimer with non-phosphorylated E2FC. No interaction with phosphorylated E2FC. Interacts preferentially with E2FC, but also with E2FA and E2FB. Interacts with SKP2A. Targeted for proteasomal degradation by the SCF(SKP2A) E3 ubiquitin ligase complex. Phosphorylated. As to expression, ubiquitous.

Its subcellular location is the nucleus. It is found in the cytoplasm. In terms of biological role, involved in the regulation of the G1/S transition. Increases the DNA binding activity of E2F proteins after heterodimerization. The complex DPB/E2FC restricts cell division and lateral root initiation and may function as a negative regulator of E2F-regulated genes. The interaction with SKP2A is controlled by auxin. This Arabidopsis thaliana (Mouse-ear cress) protein is Transcription factor-like protein DPB (DPB).